A 675-amino-acid chain; its full sequence is Calcium channel YVC1 (675 aa).

Residues 1–236 (MVSANGDLHL…PVRLKAPVYQ (236 aa)) are Cytoplasmic-facing. Residues 237-257 (NYLQMIFSFLFLGLYTLVVNG) traverse the membrane as a helical segment. Over 258–295 (KDSERVQSFDLLESIFYVFNTGFILDELTKLYYIGYAH) the chain is Vacuolar. The helical transmembrane segment at 296-316 (LSFWNLFNDTTYLIITFAMGF) threads the bilayer. Residues 317–335 (RAMSVTPLNAKYSSEDWDK) lie on the Cytoplasmic side of the membrane. A helical membrane pass occupies residues 336–355 (ISYRVLSCAAPFVWSRLLLY). Residues 356–376 (LESQRFIGIMLVILKHMMKES) are Vacuolar-facing. Residues 377-397 (IVFFFLLFLIMIGFTQGFLGL) traverse the membrane as a helical segment. The Cytoplasmic portion of the chain corresponds to 398–405 (DSADGKRD). A helical transmembrane segment spans residues 406 to 426 (ITGPILGNLTITVLGLGSFDV). Over 427–436 (FEEFAPPYAA) the chain is Vacuolar. The helical transmembrane segment at 437–457 (ILYYGYYFIVSVILLNILIAL) threads the bilayer. Over 458-675 (YSTAYQKVID…EKLDIKDKKE (218 aa)) the chain is Cytoplasmic. T636 carries the post-translational modification Phosphothreonine.

This sequence belongs to the transient receptor (TC 1.A.4) family.

The protein resides in the vacuole membrane. Functionally, required for release of calcium ions from the vacuole in response to hyperosmotic shock. The sequence is that of Calcium channel YVC1 from Saccharomyces cerevisiae (strain ATCC 204508 / S288c) (Baker's yeast).